Here is a 410-residue protein sequence, read N- to C-terminus: MEQEKRQINLPVFLDYQSTTKTDDRVLEAMMPYFKQFSNPHSRSHSFGWKAESAVELARERVASLINAEAKEVIFTSGATESNNLAIKGVANFYKNKGNHIITVRTEHKCVLDSCRYLETEGFHVTYLDVQKNGILDLELLKSSITDKTILVSVMMVNNEIGVIQPIEKIGKICHEHGIFFHTDAAQAFGKISIDVKKMNIDLLSISGHKIYAPMGIGALYIRKRQPRVRLTPMINGGGQERGMRSGTVPTPLAVGLGEAARIAQEVMEEENIRIRELRDILYNEIKKHLPYVVLNGDYEQRIAGNLNLSFPYVEGESIIMAINNLAVSSGSACTSASLEPSYVLRALNIEKDLEHSSIRFGIGRFTTREEILYAAELIVSSIKKLREMSPLWEMVQEGVDLNNIKWDAH.

Residues 79-80 (AT), asparagine 159, glutamine 187, and 207-209 (SGH) contribute to the pyridoxal 5'-phosphate site. The residue at position 210 (lysine 210) is an N6-(pyridoxal phosphate)lysine. Threonine 248 provides a ligand contact to pyridoxal 5'-phosphate. Residue cysteine 334 is the Cysteine persulfide intermediate of the active site. [2Fe-2S] cluster is bound at residue cysteine 334.

Belongs to the class-V pyridoxal-phosphate-dependent aminotransferase family. NifS/IscS subfamily. As to quaternary structure, homodimer. Forms a heterotetramer with IscU, interacts with other sulfur acceptors. Pyridoxal 5'-phosphate serves as cofactor.

The protein localises to the cytoplasm. It carries out the reaction (sulfur carrier)-H + L-cysteine = (sulfur carrier)-SH + L-alanine. It participates in cofactor biosynthesis; iron-sulfur cluster biosynthesis. In terms of biological role, master enzyme that delivers sulfur to a number of partners involved in Fe-S cluster assembly, tRNA modification or cofactor biosynthesis. Catalyzes the removal of elemental sulfur atoms from cysteine to produce alanine. Functions as a sulfur delivery protein for Fe-S cluster synthesis onto IscU, an Fe-S scaffold assembly protein, as well as other S acceptor proteins. This chain is Cysteine desulfurase IscS, found in Ehrlichia chaffeensis (strain ATCC CRL-10679 / Arkansas).